Consider the following 286-residue polypeptide: Phosphatidylserine decarboxylase proenzyme (286 aa).

Catalysis depends on charge relay system; for autoendoproteolytic cleavage activity residues D89, H146, and S252. The active-site Schiff-base intermediate with substrate; via pyruvic acid; for decarboxylase activity is S252. Pyruvic acid (Ser); by autocatalysis is present on S252.

Belongs to the phosphatidylserine decarboxylase family. PSD-B subfamily. Prokaryotic type I sub-subfamily. Heterodimer of a large membrane-associated beta subunit and a small pyruvoyl-containing alpha subunit. The cofactor is pyruvate. Post-translationally, is synthesized initially as an inactive proenzyme. Formation of the active enzyme involves a self-maturation process in which the active site pyruvoyl group is generated from an internal serine residue via an autocatalytic post-translational modification. Two non-identical subunits are generated from the proenzyme in this reaction, and the pyruvate is formed at the N-terminus of the alpha chain, which is derived from the carboxyl end of the proenzyme. The autoendoproteolytic cleavage occurs by a canonical serine protease mechanism, in which the side chain hydroxyl group of the serine supplies its oxygen atom to form the C-terminus of the beta chain, while the remainder of the serine residue undergoes an oxidative deamination to produce ammonia and the pyruvoyl prosthetic group on the alpha chain. During this reaction, the Ser that is part of the protease active site of the proenzyme becomes the pyruvoyl prosthetic group, which constitutes an essential element of the active site of the mature decarboxylase.

The protein resides in the cell membrane. It carries out the reaction a 1,2-diacyl-sn-glycero-3-phospho-L-serine + H(+) = a 1,2-diacyl-sn-glycero-3-phosphoethanolamine + CO2. It participates in phospholipid metabolism; phosphatidylethanolamine biosynthesis; phosphatidylethanolamine from CDP-diacylglycerol: step 2/2. In terms of biological role, catalyzes the formation of phosphatidylethanolamine (PtdEtn) from phosphatidylserine (PtdSer). The sequence is that of Phosphatidylserine decarboxylase proenzyme from Shewanella loihica (strain ATCC BAA-1088 / PV-4).